Reading from the N-terminus, the 364-residue chain is Palmitoyltransferase ZDHHC9 (364 aa).

At 1–35 (MSVMVVRKKVTRKWEKLPGRNTFCCDGRVMMARQK) the chain is on the cytoplasmic side. Residues 36–56 (GIFYLTLFLILGTCTLFFAFE) traverse the membrane as a helical segment. The Lumenal segment spans residues 57-63 (CRYLAVQ). Residues 64-84 (LSPAIPVFAAMLFLFSMATLL) form a helical membrane-spanning segment. Residues 85–183 (RTSFSDPGVI…NCVGKRNYRY (99 aa)) lie on the Cytoplasmic side of the membrane. The 51-residue stretch at 139–189 (KYCYTCKIFRPPRASHCSICDNCVERFDHHCPWVGNCVGKRNYRYFYLFIL) folds into the DHHC domain. The active-site S-palmitoyl cysteine intermediate is the Cys-169. A helical membrane pass occupies residues 184–204 (FYLFILSLSLLTIYVFAFNIV). The Lumenal portion of the chain corresponds to 205–228 (YVALKSLKIGFLETLKETPGTVLE). The helical transmembrane segment at 229–249 (VLICFFTLWSVVGLTGFHTFL) threads the bilayer. The Cytoplasmic portion of the chain corresponds to 250–364 (VALNQTTNED…PPQEASEAEK (115 aa)). The interval 303–364 (PLEESGSRPP…PPQEASEAEK (62 aa)) is disordered. Residues 310–336 (RPPSTQETSSSLLPQSPASTEHMNSNE) show a composition bias toward polar residues. Over residues 346-356 (EMPPPEPPEPP) the composition is skewed to pro residues.

It belongs to the DHHC palmitoyltransferase family. ERF2/ZDHHC9 subfamily. Interacts with GOLGA7.

It localises to the endoplasmic reticulum membrane. The protein localises to the golgi apparatus membrane. It catalyses the reaction L-cysteinyl-[protein] + hexadecanoyl-CoA = S-hexadecanoyl-L-cysteinyl-[protein] + CoA. Its function is as follows. Palmitoyltransferase that catalyzes the addition of palmitate onto various protein substrates, such as ADRB2, GSDMD, HRAS, NRAS and CGAS. The ZDHHC9-GOLGA7 complex is a palmitoyltransferase specific for HRAS and NRAS. May have a palmitoyltransferase activity toward the beta-2 adrenergic receptor/ADRB2 and therefore regulate G protein-coupled receptor signaling. Acts as a regulator of innate immunity by catalyzing palmitoylation of CGAS, thereby promoting CGAS homodimerization and cyclic GMP-AMP synthase activity. Activates pyroptosis by catalyzing palmitoylation of gasdermin-D (GSDMD), thereby promoting membrane translocation and pore formation of GSDMD. This Mus musculus (Mouse) protein is Palmitoyltransferase ZDHHC9 (Zdhhc9).